The primary structure comprises 331 residues: Protoheme IX farnesyltransferase (331 aa).

8 helical membrane-spanning segments follow: residues 63-83 (LACTLGGGALAAAAAGALNCL), 109-129 (SVFIGAVACTLVSSALLVSGV), 132-152 (LAAGLTLLGLCSYVLLYTAFL), 160-180 (IVFGGVAGAIPPLVGASAAAG), 188-208 (WLFSLVMVWTPAHFWALAILL), 215-235 (VGIPMLPTVSGPFVTAKAISV), 241-261 (VFLSFLGCFVLPEGGLLYGIL), and 294-314 (ILYMFGVCFLLVISRLQVSIV).

The protein belongs to the UbiA prenyltransferase family. Protoheme IX farnesyltransferase subfamily.

It is found in the cell inner membrane. It carries out the reaction heme b + (2E,6E)-farnesyl diphosphate + H2O = Fe(II)-heme o + diphosphate. The protein operates within porphyrin-containing compound metabolism; heme O biosynthesis; heme O from protoheme: step 1/1. Converts heme B (protoheme IX) to heme O by substitution of the vinyl group on carbon 2 of heme B porphyrin ring with a hydroxyethyl farnesyl side group. The protein is Protoheme IX farnesyltransferase of Prochlorococcus marinus (strain NATL1A).